A 226-amino-acid chain; its full sequence is Orotate phosphoribosyltransferase (226 aa).

Residues K26, 73–74 (YK), R100, K101, K104, H106, and 128–136 (EDVTTSGKS) contribute to the 5-phospho-alpha-D-ribose 1-diphosphate site. Orotate-binding residues include T132 and R161.

This sequence belongs to the purine/pyrimidine phosphoribosyltransferase family. PyrE subfamily. Homodimer. Requires Mg(2+) as cofactor.

It carries out the reaction orotidine 5'-phosphate + diphosphate = orotate + 5-phospho-alpha-D-ribose 1-diphosphate. It participates in pyrimidine metabolism; UMP biosynthesis via de novo pathway; UMP from orotate: step 1/2. In terms of biological role, catalyzes the transfer of a ribosyl phosphate group from 5-phosphoribose 1-diphosphate to orotate, leading to the formation of orotidine monophosphate (OMP). This chain is Orotate phosphoribosyltransferase, found in Agathobacter rectalis (strain ATCC 33656 / DSM 3377 / JCM 17463 / KCTC 5835 / VPI 0990) (Eubacterium rectale).